A 151-amino-acid polypeptide reads, in one-letter code: MIKDLAKNKKALHDFSILETFEAGIVLKGSEVKALRAGRANLKDSFVRVIKGELFLLNAHISYLETTHSAFRPNERAARKLLMHRKQIDKIFGQVSQDGLALVVLALYLSDKNIVKARLALAKGKNLHDKRETLKRREADKEARAAIKRYV.

Belongs to the SmpB family.

It localises to the cytoplasm. Functionally, required for rescue of stalled ribosomes mediated by trans-translation. Binds to transfer-messenger RNA (tmRNA), required for stable association of tmRNA with ribosomes. tmRNA and SmpB together mimic tRNA shape, replacing the anticodon stem-loop with SmpB. tmRNA is encoded by the ssrA gene; the 2 termini fold to resemble tRNA(Ala) and it encodes a 'tag peptide', a short internal open reading frame. During trans-translation Ala-aminoacylated tmRNA acts like a tRNA, entering the A-site of stalled ribosomes, displacing the stalled mRNA. The ribosome then switches to translate the ORF on the tmRNA; the nascent peptide is terminated with the 'tag peptide' encoded by the tmRNA and targeted for degradation. The ribosome is freed to recommence translation, which seems to be the essential function of trans-translation. This is SsrA-binding protein from Campylobacter concisus (strain 13826).